We begin with the raw amino-acid sequence, 245 residues long: Myozenin-3 (245 aa).

Ser-31 carries the phosphoserine modification. The tract at residues 50–67 is binding to ACTN2, PPP3CA and TCAP; sequence LLFQKRQRRVQKFTFELS. The binding to FLNC stretch occupies residues 67–108; that stretch reads SESLQAILASSARGKVAGRAAQATVPNGLEEQNHHSETHVFQ. The disordered stretch occupies residues 93–134; sequence NGLEEQNHHSETHVFQGSPGDPGITHLGAAGTGSVRSPSALA. Positions 180–201 are binding to ACTN2; it reads PIPRDYRNFNKTPVPFGGPHVR.

This sequence belongs to the myozenin family. In terms of assembly, interacts with ACTN2, LDB3, FLNC, PPP3CA and TCAP. In terms of tissue distribution, expressed specifically in skeletal muscle and is enriched in fast-twitch muscle fibers. Not detected in heart.

The protein localises to the cytoplasm. It localises to the myofibril. It is found in the sarcomere. The protein resides in the z line. In terms of biological role, myozenins may serve as intracellular binding proteins involved in linking Z line proteins such as alpha-actinin, gamma-filamin, TCAP/telethonin, LDB3/ZASP and localizing calcineurin signaling to the sarcomere. Plays an important role in the modulation of calcineurin signaling. May play a role in myofibrillogenesis. The polypeptide is Myozenin-3 (Mus musculus (Mouse)).